Consider the following 109-residue polypeptide: Protein ELF4-LIKE 3 (109 aa).

A disordered region spans residues serine 88 to alanine 109.

It belongs to the EARLY FLOWERING 4 family. Homodimer.

Its subcellular location is the nucleus. Component of the central CCA1/LHY-TOC1 feedback loop in the circadian clock that promotes clock accuracy and is required for sustained rhythms in the absence of daily light/dark cycles. This Arabidopsis thaliana (Mouse-ear cress) protein is Protein ELF4-LIKE 3 (EFL3).